Here is an 810-residue protein sequence, read N- to C-terminus: Bifunctional aspartokinase/homoserine dehydrogenase 2 (810 aa).

An aspartokinase region spans residues 2-252 (SVIAQAGAKG…VKDACLLPLL (251 aa)). The interval 253–463 (RLDEASELAR…RAEKRIGLVL (211 aa)) is interface. A homoserine dehydrogenase region spans residues 464-810 (FGKGNIGSRW…SDINRLAQLL (347 aa)). Positions 468 and 469 each coordinate NADP(+). Residues Ile469 and Val498 each contribute to the NAD(+) site. Position 469 (Ile469) interacts with NADPH. NADP(+) contacts are provided by Arg501, Thr549, and Lys573. Thr549 contributes to the NAD(+) binding site. Thr549 and Lys573 together coordinate NADPH. Na(+) contacts are provided by Val603, Ala605, and Leu607. Gly658 and Glu661 together coordinate NADP(+). 2 residues coordinate L-homoserine: Glu661 and Asp672. Lys676 functions as the Proton donor in the catalytic mechanism. Gly791 is a binding site for NADP(+). Position 791 (Gly791) interacts with NAD(+). Position 791 (Gly791) interacts with NADPH.

This sequence in the N-terminal section; belongs to the aspartokinase family. In the C-terminal section; belongs to the homoserine dehydrogenase family. In terms of assembly, homotetramer. A metal cation serves as cofactor.

The catalysed reaction is L-homoserine + NADP(+) = L-aspartate 4-semialdehyde + NADPH + H(+). It carries out the reaction L-homoserine + NAD(+) = L-aspartate 4-semialdehyde + NADH + H(+). It catalyses the reaction L-aspartate + ATP = 4-phospho-L-aspartate + ADP. It participates in amino-acid biosynthesis; L-lysine biosynthesis via DAP pathway; (S)-tetrahydrodipicolinate from L-aspartate: step 1/4. Its pathway is amino-acid biosynthesis; L-methionine biosynthesis via de novo pathway; L-homoserine from L-aspartate: step 1/3. It functions in the pathway amino-acid biosynthesis; L-methionine biosynthesis via de novo pathway; L-homoserine from L-aspartate: step 3/3. The protein operates within amino-acid biosynthesis; L-threonine biosynthesis; L-threonine from L-aspartate: step 1/5. It participates in amino-acid biosynthesis; L-threonine biosynthesis; L-threonine from L-aspartate: step 3/5. Bifunctional aspartate kinase and homoserine dehydrogenase that catalyzes the first and the third steps toward the synthesis of lysine, methionine and threonine from aspartate. The chain is Bifunctional aspartokinase/homoserine dehydrogenase 2 (metL) from Escherichia coli (strain K12).